The primary structure comprises 223 residues: Urease accessory protein UreF (223 aa).

The protein belongs to the UreF family. As to quaternary structure, ureD, UreF and UreG form a complex that acts as a GTP-hydrolysis-dependent molecular chaperone, activating the urease apoprotein by helping to assemble the nickel containing metallocenter of UreC. The UreE protein probably delivers the nickel.

The protein localises to the cytoplasm. Required for maturation of urease via the functional incorporation of the urease nickel metallocenter. This is Urease accessory protein UreF from Paenarthrobacter aurescens (strain TC1).